Reading from the N-terminus, the 89-residue chain is Small ribosomal subunit protein bS16 (89 aa).

It belongs to the bacterial ribosomal protein bS16 family.

The chain is Small ribosomal subunit protein bS16 from Chloroflexus aurantiacus (strain ATCC 29364 / DSM 637 / Y-400-fl).